Reading from the N-terminus, the 284-residue chain is Bifunctional protein FolD (284 aa).

NADP(+) contacts are provided by residues 164-166 (GRS) and Ser189.

This sequence belongs to the tetrahydrofolate dehydrogenase/cyclohydrolase family. In terms of assembly, homodimer.

The catalysed reaction is (6R)-5,10-methylene-5,6,7,8-tetrahydrofolate + NADP(+) = (6R)-5,10-methenyltetrahydrofolate + NADPH. The enzyme catalyses (6R)-5,10-methenyltetrahydrofolate + H2O = (6R)-10-formyltetrahydrofolate + H(+). The protein operates within one-carbon metabolism; tetrahydrofolate interconversion. Its function is as follows. Catalyzes the oxidation of 5,10-methylenetetrahydrofolate to 5,10-methenyltetrahydrofolate and then the hydrolysis of 5,10-methenyltetrahydrofolate to 10-formyltetrahydrofolate. The polypeptide is Bifunctional protein FolD (Listeria monocytogenes serotype 4b (strain F2365)).